The primary structure comprises 178 residues: MSVENLKEALPEYAKDLKLNLGSITRTTELNEEQLWGTLLASAAATRNTQVLTEIGAEAADTLSAEAYHAALGAASVMAMNNVFYRGRGFLDGKYDDLRAGLRMNIIGNPGVEKANFELWCFAVSAINGCPDCVASHEHTLREAGVSRETIQEALKAAAIISGVAQAIVASQTLATAG.

Residue C130 is the Proton donor of the active site. Residues C130 and C133 are joined by a disulfide bond. C133 functions as the Cysteine sulfenic acid (-SOH) intermediate in the catalytic mechanism.

The protein belongs to the AhpD family. In terms of assembly, homotrimer.

The enzyme catalyses N(6)-[(R)-dihydrolipoyl]-L-lysyl-[lipoyl-carrier protein] + a hydroperoxide = N(6)-[(R)-lipoyl]-L-lysyl-[lipoyl-carrier protein] + an alcohol + H2O. Functionally, antioxidant protein with alkyl hydroperoxidase activity. Required for the reduction of the AhpC active site cysteine residues and for the regeneration of the AhpC enzyme activity. The chain is Alkyl hydroperoxide reductase AhpD from Mycolicibacterium paratuberculosis (strain ATCC BAA-968 / K-10) (Mycobacterium paratuberculosis).